The primary structure comprises 500 residues: NAD(P)H-quinone oxidoreductase chain 4, chloroplastic (500 aa).

14 helical membrane-spanning segments follow: residues 4-24, 37-57, 87-107, 113-130, 134-154, 167-187, 208-228, 242-262, 272-292, 305-325, 330-350, 386-406, 411-431, and 462-482; these read FPWL…IFFL, ICIC…HFQL, IGPI…AWPI, LFHF…GSFS, LLLF…LLAM, FILY…GVAL, VLEI…LPII, HYST…YGLI, AHSI…IYAA, IAYS…SLTD, GALL…FLAG, LALP…GIIT, VLIP…LTPI, and LFLS…PDFV.

This sequence belongs to the complex I subunit 4 family.

The protein localises to the plastid. The protein resides in the chloroplast thylakoid membrane. It carries out the reaction a plastoquinone + NADH + (n+1) H(+)(in) = a plastoquinol + NAD(+) + n H(+)(out). It catalyses the reaction a plastoquinone + NADPH + (n+1) H(+)(in) = a plastoquinol + NADP(+) + n H(+)(out). This is NAD(P)H-quinone oxidoreductase chain 4, chloroplastic from Atropa belladonna (Belladonna).